The chain runs to 60 residues: Pepsin A (60 aa).

Residues 1-45 (FIIKVPLVKKKSLRKNLKEHGLLKDFLKKHSPNPASKYFPQEAAV) constitute a propeptide, activation peptide.

The protein belongs to the peptidase A1 family.

Its subcellular location is the secreted. It catalyses the reaction Preferential cleavage: hydrophobic, preferably aromatic, residues in P1 and P1' positions. Cleaves 1-Phe-|-Val-2, 4-Gln-|-His-5, 13-Glu-|-Ala-14, 14-Ala-|-Leu-15, 15-Leu-|-Tyr-16, 16-Tyr-|-Leu-17, 23-Gly-|-Phe-24, 24-Phe-|-Phe-25 and 25-Phe-|-Tyr-26 bonds in the B chain of insulin.. Functionally, shows particularly broad specificity; although bonds involving phenylalanine and leucine are preferred, many others are also cleaved to some extent. This chain is Pepsin A (PGA), found in Ursus thibetanus (Asiatic black bear).